The chain runs to 79 residues: Omega-phylotoxin-To1a (79 aa).

An N-terminal signal peptide occupies residues 1–21 (MKKTFCFILILVCIVLKSVNA). Positions 22–38 (EEEDNFEESSLEMETAR) are excised as a propeptide. 4 cysteine pairs are disulfide-bonded: C39-C59, C46-C63, C58-C78, and C65-C76.

Expressed by the venom duct.

It localises to the secreted. Functionally, insect-specific toxin that probably acts as an inhibitor of presynaptic insect calcium channels, presumably Cav2 subtype. In vivo, induces immediate paralysis on insects, followed by death when high doses are injected. The polypeptide is Omega-phylotoxin-To1a (Tibellus oblongus (Oblong running crab spider)).